The chain runs to 331 residues: FMRFamide-related neuropeptides (331 aa).

Residues 1-25 (MRCWSPCSLLVVIVIYCLSSHTSEA) form the signal peptide. The propeptide occupies 26 to 65 (FDLAQACVESQRLSLLPICDTIFAVQQEGAQQSADDGMRS). Residues Phe71 and Phe83 each carry the phenylalanine amide modification. A propeptide spanning residues 86 to 94 (NVPDLPFED) is cleaved from the precursor. The residue at position 100 (Phe100) is a Phenylalanine amide. The propeptide occupies 103–168 (AAPQLDDLLK…YIDDVEDSDV (66 aa)). The interval 122 to 158 (QKADETSVRRKRSTDAAPQNNAENPEQKNDSAKITKR) is disordered. Basic and acidic residues predominate over residues 146–158 (PEQKNDSAKITKR). Phenylalanine amide is present on residues Phe174 and Phe181. Positions 184–194 (NPSDAGNKLTE) are excised as a propeptide. Residue Phe200 is modified to Phenylalanine amide. Positions 203–205 (DPE) are excised as a propeptide. Phe211 is subject to Phenylalanine amide. Residues 214-216 (SDD) constitute a propeptide that is removed on maturation. Phe222 is modified (phenylalanine amide). Positions 225–236 (NPSDVEDELEED) are excised as a propeptide. Phe242 is subject to Phenylalanine amide. A propeptide spanning residues 245–254 (GGEDDEEEAE) is cleaved from the precursor. Phenylalanine amide is present on Phe260. Residues 263 to 265 (DPE) constitute a propeptide that is removed on maturation. The residue at position 271 (Phe271) is a Phenylalanine amide. Positions 274-277 (SGED) are excised as a propeptide. Over residues 282 to 296 (RFGRNPDEQEADKRF) the composition is skewed to basic and acidic residues. Residues 282–310 (RFGRNPDEQEADKRFMRFGRGGEDDEVST) are disordered. Position 283 is a phenylalanine amide (Phe283). The propeptide occupies 286-293 (NPDEQEAD). Phenylalanine amide is present on Phe299. Residues 302–312 (GGEDDEVSTED) constitute a propeptide that is removed on maturation. Phe318 carries the phenylalanine amide modification. Positions 321–331 (SADKCKGCLEG) are excised as a propeptide.

Belongs to the FARP (FMRFamide related peptide) family.

Its subcellular location is the secreted. In terms of biological role, excitatory neurotransmitters that directly modulate chromatophore function by activating chromatophore expansion at the chromatophore neuromuscular junction. This is FMRFamide-related neuropeptides from Doryteuthis pealeii (Longfin inshore squid).